We begin with the raw amino-acid sequence, 547 residues long: Germacrene A synthase (547 aa).

4 residues coordinate Mg(2+): Asp-300, Asp-304, Asp-443, and Glu-451. The short motif at 300–304 is the DDXXD motif element; that stretch reads DDTYD.

It belongs to the terpene synthase family. Tpsa subfamily. Mg(2+) serves as cofactor. Requires Mn(2+) as cofactor. As to expression, expressed in leaves.

It is found in the plastid. It localises to the chloroplast. The enzyme catalyses (2E,6E)-farnesyl diphosphate = germacrene A + diphosphate. The catalysed reaction is (2E,6E)-farnesyl diphosphate = (1S,2S,4R)-beta-elemene + diphosphate. It functions in the pathway secondary metabolite biosynthesis; terpenoid biosynthesis. In terms of biological role, sesquiterpene synthase involved in the biosynthesis of volatile compounds widely used in aromatherapy and folk medicine, and present in culinary herbs. Mediates the conversion of (2E,6E)-farnesyl diphosphate (FPP) into germacrene A and beta-elemene. Not able to use (2E)-geranyl diphosphate (GPP) as substrate. In Lavandula pedunculata subsp. lusitanica (French lavender), this protein is Germacrene A synthase.